The primary structure comprises 267 residues: Tryptophan synthase alpha chain (267 aa).

Catalysis depends on proton acceptor residues E47 and D58.

The protein belongs to the TrpA family. As to quaternary structure, tetramer of two alpha and two beta chains.

The enzyme catalyses (1S,2R)-1-C-(indol-3-yl)glycerol 3-phosphate + L-serine = D-glyceraldehyde 3-phosphate + L-tryptophan + H2O. The protein operates within amino-acid biosynthesis; L-tryptophan biosynthesis; L-tryptophan from chorismate: step 5/5. Its function is as follows. The alpha subunit is responsible for the aldol cleavage of indoleglycerol phosphate to indole and glyceraldehyde 3-phosphate. This chain is Tryptophan synthase alpha chain, found in Pelodictyon phaeoclathratiforme (strain DSM 5477 / BU-1).